Reading from the N-terminus, the 184-residue chain is UPF0398 protein BCB4264_A1614 (184 aa).

This sequence belongs to the UPF0398 family.

This chain is UPF0398 protein BCB4264_A1614, found in Bacillus cereus (strain B4264).